Reading from the N-terminus, the 284-residue chain is Bifunctional protein FolD (284 aa).

NADP(+) is bound by residues 166–168 and Ile232; that span reads GAS.

Belongs to the tetrahydrofolate dehydrogenase/cyclohydrolase family. In terms of assembly, homodimer.

The enzyme catalyses (6R)-5,10-methylene-5,6,7,8-tetrahydrofolate + NADP(+) = (6R)-5,10-methenyltetrahydrofolate + NADPH. It catalyses the reaction (6R)-5,10-methenyltetrahydrofolate + H2O = (6R)-10-formyltetrahydrofolate + H(+). It functions in the pathway one-carbon metabolism; tetrahydrofolate interconversion. In terms of biological role, catalyzes the oxidation of 5,10-methylenetetrahydrofolate to 5,10-methenyltetrahydrofolate and then the hydrolysis of 5,10-methenyltetrahydrofolate to 10-formyltetrahydrofolate. In Pseudomonas paraeruginosa (strain DSM 24068 / PA7) (Pseudomonas aeruginosa (strain PA7)), this protein is Bifunctional protein FolD.